The primary structure comprises 523 residues: Signal peptide peptidase-like 3 (523 aa).

The first 35 residues, 1–35 (MAFPAPSSSSPRRRGRGLAYLLVSVLLLASRVPGA), serve as a signal peptide directing secretion. Over 36–207 (AGADSEFEDG…EKPSFDGAIP (172 aa)) the chain is Lumenal. In terms of domain architecture, PA spans 110-182 (SAPLASSIAV…SQSAGRKILS (73 aa)). N-linked (GlcNAc...) asparagine glycosylation is present at asparagine 159. Residues 208–228 (FLWLMAVGSVACASVWSFVVV) form a helical membrane-spanning segment. Topologically, residues 229–254 (GDEDKNAPTLGGEEAADSEIVELQTK) are cytoplasmic. The helical transmembrane segment at 255–272 (TALVFIVTASLVLLFLFF) threads the bilayer. Over 273–275 (FKS) the chain is Lumenal. The helical transmembrane segment at 276–298 (TWSAWLLVVLFCLSGLQGLHYVA) threads the bilayer. Residues 299–321 (STLIVRTCDRCREAKVALPVLGN) are Cytoplasmic-facing. A helical transmembrane segment spans residues 322–342 (VTVVTLVILPLALIFVVVWAV). Residues 343-347 (HQNSP) lie on the Lumenal side of the membrane. A helical transmembrane segment spans residues 348 to 368 (FAWVGQDLMGICMMILVLQVV). Residues 369–377 (HLPNIKVAT) are Cytoplasmic-facing. A helical membrane pass occupies residues 378 to 398 (ALLVSAFMYDIFWVFISPFIF). The active site involves aspartate 387. The Lumenal segment spans residues 399-430 (KKSVMITVARGSDEGPSLPMVLKMPKEFDTWN). The helical transmembrane segment at 431–451 (GYDMIGFGDILFPGLLVAFSF) threads the bilayer. The active site involves aspartate 439. Residues 452 to 465 (RYDRANGKDLTDGY) lie on the Cytoplasmic side of the membrane. The helical transmembrane segment at 466 to 486 (FLCLMIGYAFGLSCTYVGLYL) threads the bilayer. Residues 487 to 489 (MKS) lie on the Lumenal side of the membrane. The chain crosses the membrane as a helical span at residues 490–510 (GQPALLYLVPSTLGTIVTLGA). Residues 492-494 (PAL) carry the PAL motif. Residues 511–523 (KRGELSQLWNAKV) lie on the Cytoplasmic side of the membrane.

It belongs to the peptidase A22B family. Post-translationally, glycosylated.

It is found in the endosome membrane. Functionally, intramembrane-cleaving aspartic protease (I-CLiP) that cleaves type II membrane signal peptides in the hydrophobic plane of the membrane. In Oryza sativa subsp. japonica (Rice), this protein is Signal peptide peptidase-like 3 (SPPL3).